Consider the following 60-residue polypeptide: Small ribosomal subunit protein eS31 (60 aa).

Residues Cys-32, Cys-35, Cys-50, and Cys-53 each coordinate Zn(2+). A C4-type zinc finger spans residues 32–53; it reads CPRCGAGVFMGEHKDRFSCGKC.

Belongs to the eukaryotic ribosomal protein eS31 family. Part of the 30S ribosomal subunit. It depends on Zn(2+) as a cofactor.

The chain is Small ribosomal subunit protein eS31 from Methanocorpusculum labreanum (strain ATCC 43576 / DSM 4855 / Z).